The chain runs to 229 residues: Protein 33K (229 aa).

The disordered stretch occupies residues 1–157 (MAPKKKLQLP…GALRLAPNEP (157 aa)). Over residues 14–54 (TDEEEYWDSQAEEVLDEEEEDMMEDWESLDEEASEVEEVSD) the composition is skewed to acidic residues. Composition is skewed to low complexity over residues 55-64 (ETPSPSVAFP), 71-82 (SATGSSMATTSA), and 100-122 (TTGT…AAAT). The segment at 172–199 (YAIFQQSRGQEQELKIKNRSLRSLTRSC) is necessary for nuclear subcellular location. Residues 178–198 (SRGQEQELKIKNRSLRSLTRS) are RS-repeat; required for splicing enhancer activity.

It belongs to the adenoviridae splicing factor family. In terms of assembly, homooligomer. Interacts with DBP; this interaction occurs at a unique vertex during genome packaging. Interacts with IVa2; this interaction occurs at a unique vertex during genome packaging and seems to potentiate IVa2 and 33K oligomerization. Phosphorylated in vitro by human PKA and PRKDC. PRKDC inhibits, whereas PKA activates the splicing factor.

Its subcellular location is the host nucleus. In terms of biological role, promotes alternative splicing of late transcripts by promoting splicing at weak 3' splice sites. Required for the temporal activation of major late pre-mRNA splicing at late times of infection. Induces the splicing and expression of the late capsid vertex protein. Its function is as follows. Probably functions as the small terminase that is part of the molecular motor that translocates genomic DNA in empty capsid during DNA packaging. This motor is located at a unique vertex and comprises at least the IVa2 ATPase, the small terminase 33K and probably a portal. Forms a ring-like structure of about 17 nm in which genomic DNA is translocated into the capsid. Stimulates IVa2 ATPase activity in the presence of the viral genome. Once the DNA is packaged, the terminase detaches: the 33K protein is present in the empty particles, but not in the mature virions. Also involved in virion assembly. The polypeptide is Protein 33K (Homo sapiens (Human)).